Reading from the N-terminus, the 155-residue chain is uncharacterized protein (155 aa).

Basic and acidic residues predominate over residues 28-38 (KKGKDRPREDG). The disordered stretch occupies residues 28-52 (KKGKDRPREDGTQQQPSESKGEAAC).

This is an uncharacterized protein from Dryophytes versicolor (chameleon treefrog).